A 315-amino-acid chain; its full sequence is Ferrochelatase (315 aa).

H193 and E273 together coordinate Fe cation.

This sequence belongs to the ferrochelatase family.

Its subcellular location is the cytoplasm. The enzyme catalyses heme b + 2 H(+) = protoporphyrin IX + Fe(2+). It functions in the pathway porphyrin-containing compound metabolism; protoheme biosynthesis; protoheme from protoporphyrin-IX: step 1/1. In terms of biological role, catalyzes the ferrous insertion into protoporphyrin IX. In Wolbachia sp. subsp. Drosophila simulans (strain wRi), this protein is Ferrochelatase.